Consider the following 356-residue polypeptide: Protein-glutamate methylesterase/protein-glutamine glutaminase 2 (356 aa).

In terms of domain architecture, Response regulatory spans 4-121; it reads KVLIVDDSAV…KGFLEESSHE (118 aa). The residue at position 55 (Asp-55) is a 4-aspartylphosphate. A CheB-type methylesterase domain is found at 169 to 356; the sequence is FATTERIIAI…LELIAKAICR (188 aa). Active-site residues include Ser-181, His-207, and Asp-303.

The protein belongs to the CheB family. Phosphorylated by CheA. Phosphorylation of the N-terminal regulatory domain activates the methylesterase activity.

It localises to the cytoplasm. The catalysed reaction is [protein]-L-glutamate 5-O-methyl ester + H2O = L-glutamyl-[protein] + methanol + H(+). The enzyme catalyses L-glutaminyl-[protein] + H2O = L-glutamyl-[protein] + NH4(+). Involved in chemotaxis. Part of a chemotaxis signal transduction system that modulates chemotaxis in response to various stimuli. Catalyzes the demethylation of specific methylglutamate residues introduced into the chemoreceptors (methyl-accepting chemotaxis proteins or MCP) by CheR. Also mediates the irreversible deamidation of specific glutamine residues to glutamic acid. This chain is Protein-glutamate methylesterase/protein-glutamine glutaminase 2, found in Chromobacterium violaceum (strain ATCC 12472 / DSM 30191 / JCM 1249 / CCUG 213 / NBRC 12614 / NCIMB 9131 / NCTC 9757 / MK).